The sequence spans 267 residues: Mlc titration factor A (267 aa).

Positions 111, 148, 152, and 211 each coordinate Zn(2+).

The protein belongs to the MtfA family. In terms of assembly, interacts with Mlc. The cofactor is Zn(2+).

It localises to the cytoplasm. In terms of biological role, involved in the modulation of the activity of the glucose-phosphotransferase system (glucose-PTS). Interacts with the transcriptional repressor Mlc, preventing its interaction with DNA and leading to the modulation of expression of genes regulated by Mlc, including ptsG, which encodes the PTS system glucose-specific EIICB component. Its function is as follows. Shows zinc-dependent metallopeptidase activity. The sequence is that of Mlc titration factor A from Yersinia enterocolitica serotype O:8 / biotype 1B (strain NCTC 13174 / 8081).